Here is a 354-residue protein sequence, read N- to C-terminus: Uroporphyrinogen decarboxylase (354 aa).

Substrate is bound by residues 27–31, Asp77, Tyr154, Thr209, and His327; that span reads RQAGR.

It belongs to the uroporphyrinogen decarboxylase family. In terms of assembly, homodimer.

Its subcellular location is the cytoplasm. It carries out the reaction uroporphyrinogen III + 4 H(+) = coproporphyrinogen III + 4 CO2. It participates in porphyrin-containing compound metabolism; protoporphyrin-IX biosynthesis; coproporphyrinogen-III from 5-aminolevulinate: step 4/4. Functionally, catalyzes the decarboxylation of four acetate groups of uroporphyrinogen-III to yield coproporphyrinogen-III. The protein is Uroporphyrinogen decarboxylase of Histophilus somni (strain 129Pt) (Haemophilus somnus).